The following is a 76-amino-acid chain: Serine palmitoyltransferase small subunit B (76 aa).

The Cytoplasmic segment spans residues 1 to 11 (MDFKRVKDYLS). The helical transmembrane segment at 12-29 (WLYYQYQIISCCAVLEPW) threads the bilayer. The Lumenal portion of the chain corresponds to 30 to 36 (EQSMFNT). A helical transmembrane segment spans residues 37-57 (IILTIFAMVVYTAYVFIPIHI). At 58–76 (RLAWEFFSKMCGYHSTISN) the chain is on the cytoplasmic side.

This sequence belongs to the SPTSS family. SPTSSB subfamily. In terms of assembly, component of the serine palmitoyltransferase (SPT) complex, which is composed of SPTLC1, SPTLC2 or SPTLC3 and SPTSSA or SPTSSB. The heterodimer consisting of SPTLC1 and SPTLC2/SPTLC3 forms the catalytic core of the enzyme, while SPTSSA or SPTSSB subunits determine substrate specificity. SPT also interacts with ORMDL proteins, especially ORMDL3, which negatively regulate SPT activity in the presence of ceramides.

It localises to the endoplasmic reticulum membrane. The protein operates within lipid metabolism; sphingolipid metabolism. Component of the serine palmitoyltransferase multisubunit enzyme (SPT) that catalyzes the initial and rate-limiting step in sphingolipid biosynthesis by condensing L-serine and activated acyl-CoA (most commonly palmitoyl-CoA) to form long-chain bases. The SPT complex is composed of SPTLC1, SPTLC2 or SPTLC3 and SPTSSA or SPTSSB. Within this complex, the heterodimer consisting of SPTLC1 and SPTLC2/SPTLC3 forms the catalytic core. Within the SPT complex, SPTSSB stimulates the catalytic activity and plays a role in substrate specificity. SPT complexes with this subunit showing a preference for longer acyl-CoAs. The SPTLC1-SPTLC2-SPTSSB complex shows a strong preference for C18-CoA substrate, while the SPTLC1-SPTLC3-SPTSSB isozyme displays an ability to use a broader range of acyl-CoAs, without apparent preference. This is Serine palmitoyltransferase small subunit B (SPTSSB) from Bos taurus (Bovine).